Reading from the N-terminus, the 368-residue chain is Proteinase-activated receptor 3 (368 aa).

Residues 1–21 (MEMKVLILVGVRLLFLPTTVC) form the signal peptide. The propeptide at 22-37 (QSGMKHVSDNSALTAE) is removed for receptor activation. Topologically, residues 38 to 93 (SFNGNEHSFEEFPLSDIEGWTGATTTIKAKCPEESITTLHVNNATMGYLRSSLSTK) are extracellular. Asparagine 80 carries an N-linked (GlcNAc...) asparagine glycan. The helical transmembrane segment at 94-114 (VIPAIYILVFVIGVPANIVTL) threads the bilayer. The Cytoplasmic portion of the chain corresponds to 115–123 (WKLSSRTKS). The helical transmembrane segment at 124–144 (ICLVIFHTNLAIADLLFCVTL) threads the bilayer. At 145 to 166 (PFKIAYHLNGNDWVFGEVMCRV) the chain is on the extracellular side. The cysteines at positions 164 and 243 are disulfide-linked. The helical transmembrane segment at 167-187 (TTVAFYGNMYCAILILTCMGI) threads the bilayer. Residues 188 to 208 (NRYLATVHPFTYRKLPKRNFT) lie on the Cytoplasmic side of the membrane. A helical transmembrane segment spans residues 209–229 (LLMCGVVWVMVVLYMLPLAIL). At 230 to 257 (KQEYHLVQPGITTCHDVHDTCESPLPFQ) the chain is on the extracellular side. A helical membrane pass occupies residues 258–278 (FYYFVSLAFFGFLIPFVVSVF). Residues 279–300 (CYTTLIHKLNAQDRKWLRYIKA) lie on the Cytoplasmic side of the membrane. The helical transmembrane segment at 301–321 (VLLILVIFTICFAPTNIILII) threads the bilayer. The Extracellular portion of the chain corresponds to 322 to 338 (HHANYYYSNTDSLYFMY). Residues 339–359 (LIALCLGSLNSCLDPFLYFIM) traverse the membrane as a helical segment. Residues 360–368 (SKIVDQLTS) lie on the Cytoplasmic side of the membrane.

Belongs to the G-protein coupled receptor 1 family. In terms of assembly, interacts with INSC/inscuteable and GPSM2. Post-translationally, a proteolytic cleavage generates a new N-terminus that functions as a tethered ligand.

It is found in the cell membrane. Functionally, receptor for activated thrombin coupled to G proteins that stimulate phosphoinositide hydrolysis. This Rattus norvegicus (Rat) protein is Proteinase-activated receptor 3 (F2rl2).